The following is a 269-amino-acid chain: MNRYQTLQKKLVPFKKGCFIPFIILGDPSIEMSLKIIDVLIENGADGLELGFPFSDPLSDGKTIQKAHLRAFSSKMNIYLCFEMLQKIRKKYNTIPIGLLLYANLIFKFGINNFYLKCFNVGIDSVLIADLPVEESNDFRKCAIANNISSVFVCPHDAKKNVIKKISLYSTGYIYLLSRSGVTGTDKKIIVPSLNLIKNLKKITEKLLIQGFGISNSKQIQKIILSGISGVICGSVIIKLIENHFQNEKKMLKNIKRLSRSLKQSTIIF.

Catalysis depends on proton acceptor residues Glu49 and Asp60.

It belongs to the TrpA family. In terms of assembly, tetramer of two alpha and two beta chains.

It carries out the reaction (1S,2R)-1-C-(indol-3-yl)glycerol 3-phosphate + L-serine = D-glyceraldehyde 3-phosphate + L-tryptophan + H2O. The protein operates within amino-acid biosynthesis; L-tryptophan biosynthesis; L-tryptophan from chorismate: step 5/5. The alpha subunit is responsible for the aldol cleavage of indoleglycerol phosphate to indole and glyceraldehyde 3-phosphate. The chain is Tryptophan synthase alpha chain from Buchnera aphidicola subsp. Schlechtendalia chinensis.